The primary structure comprises 129 residues: Small ribosomal subunit protein uS11 (129 aa).

The protein belongs to the universal ribosomal protein uS11 family. Part of the 30S ribosomal subunit. Interacts with proteins S7 and S18. Binds to IF-3.

In terms of biological role, located on the platform of the 30S subunit, it bridges several disparate RNA helices of the 16S rRNA. Forms part of the Shine-Dalgarno cleft in the 70S ribosome. This Rhizobium etli (strain CIAT 652) protein is Small ribosomal subunit protein uS11.